Consider the following 275-residue polypeptide: Probable aquaporin NIP7-1 (275 aa).

Residues 1–11 are compositionally biased toward basic and acidic residues; that stretch reads MNGEARSRVVD. The tract at residues 1-26 is disordered; that stretch reads MNGEARSRVVDQEAGSTPSTLRDEDH. 2 consecutive transmembrane segments (helical) span residues 47–67 and 76–96; these read IVMAELVGTFILMFSVCGVIS and VGLLEYAVTAGLSVVVVVYSI. An NPA 1 motif is present at residues 105–107; it reads NPS. A run of 3 helical transmembrane segments spans residues 127–147, 161–181, and 192–212; these read ITAQTLGATAATLVGVSVYGV, VSAFFVELIATSIVVFLASAL, and LTGFVIGTVISLGVLITGPIS. The NPA 2 motif lies at 217–219; it reads NPA. The chain crosses the membrane as a helical span at residues 231–251; it reads FEDLWIYMTAPVIGAIIGVLT. The residue at position 272 (S272) is a Phosphoserine.

It belongs to the MIP/aquaporin (TC 1.A.8) family. NIP (TC 1.A.8.12) subfamily. As to expression, expressed in floral buds.

Its subcellular location is the membrane. Functionally, aquaporins facilitate the transport of water and small neutral solutes across cell membranes. This chain is Probable aquaporin NIP7-1 (NIP7-1), found in Arabidopsis thaliana (Mouse-ear cress).